A 177-amino-acid polypeptide reads, in one-letter code: TRAF-interacting protein with FHA domain-containing protein A (177 aa).

The 57-residue stretch at 48 to 104 folds into the FHA domain; sequence VAFGRDYNVCRYPLLSNRVSRIQFNLQFFKHFNCSTTAIEIKNLSKKNKLYVDNLEL.

This sequence belongs to the TIFA family. Interacts with traf6.

It localises to the cytoplasm. In terms of biological role, adapter molecule that plays a key role in the activation of pro-inflammatory NF-kappa-B signaling following detection of bacterial pathogen-associated molecular pattern metabolites (PAMPs). Promotes activation of an innate immune response by inducing the oligomerization and polyubiquitination of TRAF6, which leads to the activation of TAK1 and IKK through a proteasome-independent mechanism. The protein is TRAF-interacting protein with FHA domain-containing protein A of Xenopus tropicalis (Western clawed frog).